Here is a 247-residue protein sequence, read N- to C-terminus: Carboxy-S-adenosyl-L-methionine synthase (247 aa).

S-adenosyl-L-methionine is bound by residues Tyr-40, 65–67 (GSS), 90–91 (DN), 122–123 (DI), Asn-137, and Arg-204.

It belongs to the class I-like SAM-binding methyltransferase superfamily. Cx-SAM synthase family. As to quaternary structure, homodimer.

The enzyme catalyses prephenate + S-adenosyl-L-methionine = carboxy-S-adenosyl-L-methionine + 3-phenylpyruvate + H2O. Its function is as follows. Catalyzes the conversion of S-adenosyl-L-methionine (SAM) to carboxy-S-adenosyl-L-methionine (Cx-SAM). The sequence is that of Carboxy-S-adenosyl-L-methionine synthase from Pseudomonas savastanoi pv. phaseolicola (strain 1448A / Race 6) (Pseudomonas syringae pv. phaseolicola (strain 1448A / Race 6)).